Reading from the N-terminus, the 442-residue chain is MSAAKIWRPSRGLRQAALLLLGRSGVRGLARSHPSRQQQQQFPSLDDKPQFPGASAEFVDKLEFIQPNVISGIPIYRVMDRQGQIINPSEDPHLPQEEVLKFYRSMTLLNTMDRILYESQREGRISFYMTNYGEEGTHVGSAAALERTDLVFGQYREAGVLMYRDYPLELFMSQCYGNVNDPGKGRQMPVHYGCKERHFVTISSPLATQIPQAVGAAYAAKRANANRIVICYFGEGAASEGDAHAGFNFAATLECPIIFFCRNNGYAISTPTSEQYRGDGIAARGPGYGIKSIRVDGNDVFAVYNATKEARRRAVAENQPFLIEAMTYRIGHHSTSDDSSAYRSVDEVNYWDKQDHPISRLRQYLLNQGWWDEEQEKAWRKQSRKKVMEAFEQAERKLKPNPSLLFSDVYQEMPAQLRRQQESLARHLQTYGEHYPLDHFEK.

A mitochondrion-targeting transit peptide spans 1–42; it reads MSAAKIWRPSRGLRQAALLLLGRSGVRGLARSHPSRQQQQQF. Residues 30-50 form a disordered region; sequence ARSHPSRQQQQQFPSLDDKPQ. 2 residues coordinate thiamine diphosphate: Tyr-155 and Arg-156. Ser-203 serves as a coordination point for K(+). A thiamine diphosphate-binding site is contributed by Ser-204. Residues Pro-205, Thr-208, and Gln-209 each coordinate K(+). Glu-235 is a Mg(2+) binding site. Residues Gly-236, Ala-237, and Arg-262 each coordinate thiamine diphosphate. Residues Asn-264 and Tyr-266 each contribute to the Mg(2+) site. Residue His-333 coordinates thiamine diphosphate. Ser-334 carries the post-translational modification Phosphoserine; by BCKDK. At Thr-335 the chain carries Phosphothreonine. Ser-336 and Ser-344 each carry phosphoserine. Lys-353 carries the post-translational modification N6-acetyllysine; alternate. Lys-353 carries the N6-succinyllysine; alternate modification. At Lys-377 the chain carries N6-succinyllysine.

It belongs to the BCKDHA family. Heterotetramer of 2 alpha/BCKDHA and 2 beta chains/BCKDHB that forms the branched-chain alpha-keto acid decarboxylase (E1) component of the BCKD complex. The branched-chain alpha-ketoacid dehydrogenase is a large complex composed of three major building blocks E1, E2 and E3. It is organized around E2, a 24-meric cubic core composed of DBT, to which are associated 6 to 12 copies of E1, and approximately 6 copies of the dehydrogenase E3, a DLD dimer. Interacts with PPM1K. Thiamine diphosphate is required as a cofactor. Mg(2+) serves as cofactor. In terms of processing, phosphorylated at Ser-334 by BCKDK and dephosphorylated by protein phosphatase PPM1K.

It localises to the mitochondrion matrix. It carries out the reaction N(6)-[(R)-lipoyl]-L-lysyl-[protein] + 3-methyl-2-oxobutanoate + H(+) = N(6)-[(R)-S(8)-2-methylpropanoyldihydrolipoyl]-L-lysyl-[protein] + CO2. Functionally, together with BCKDHB forms the heterotetrameric E1 subunit of the mitochondrial branched-chain alpha-ketoacid dehydrogenase (BCKD) complex. The BCKD complex catalyzes the multi-step oxidative decarboxylation of alpha-ketoacids derived from the branched-chain amino-acids valine, leucine and isoleucine producing CO2 and acyl-CoA which is subsequently utilized to produce energy. The E1 subunit catalyzes the first step with the decarboxylation of the alpha-ketoacid forming an enzyme-product intermediate. A reductive acylation mediated by the lipoylamide cofactor of E2 extracts the acyl group from the E1 active site for the next step of the reaction. In Mus musculus (Mouse), this protein is 2-oxoisovalerate dehydrogenase subunit alpha, mitochondrial.